The sequence spans 440 residues: GTPase Der (440 aa).

EngA-type G domains lie at 4–168 (PVVA…PPEK) and 177–352 (IKIA…GRHS). Residues 10–17 (GRPNVGKS), 57–61 (DTGGL), 120–123 (NKVE), 183–190 (GRPNVGKS), 230–234 (DTAGM), and 295–298 (NKWD) each bind GTP. A KH-like domain is found at 353-437 (MRISTPGLNA…PIRFVLRKKT (85 aa)).

The protein belongs to the TRAFAC class TrmE-Era-EngA-EngB-Septin-like GTPase superfamily. EngA (Der) GTPase family. Associates with the 50S ribosomal subunit.

Its function is as follows. GTPase that plays an essential role in the late steps of ribosome biogenesis. This is GTPase Der from Pelotomaculum thermopropionicum (strain DSM 13744 / JCM 10971 / SI).